The primary structure comprises 788 residues: Protein translocase subunit SecA 2 (788 aa).

Residues Gln-86, Gly-104–Thr-108, and Asp-493 contribute to the ATP site.

The protein belongs to the SecA family. Monomer and homodimer. Part of the essential Sec protein translocation apparatus which comprises SecA, SecYEG and auxiliary proteins SecDF. Other proteins may also be involved.

The protein resides in the cell membrane. It is found in the cytoplasm. It carries out the reaction ATP + H2O + cellular proteinSide 1 = ADP + phosphate + cellular proteinSide 2.. Functionally, part of the Sec protein translocase complex. Interacts with the SecYEG preprotein conducting channel. Has a central role in coupling the hydrolysis of ATP to the transfer of proteins into and across the cell membrane, serving as an ATP-driven molecular motor driving the stepwise translocation of polypeptide chains across the membrane. The chain is Protein translocase subunit SecA 2 from Bacillus thuringiensis (strain Al Hakam).